The chain runs to 193 residues: MIKAILIFNNHGKPRLSKFYQPYSEDTQQQIIRETFHLVSKRDENVCNFLEGGLLIGGSDNKLIYRHYATLYFVFCVDSSESELGILDLIQVFVETLDKCFENVCELDLIFHVDKVHNILAEMVMGGMVLETNMNEIVTQIDAQNKLEKSEAGLAGAPARAVSAVKNMNLPEIPRNINIGDISIKVPNLPSFK.

Ser191 carries the phosphoserine modification.

It belongs to the adaptor complexes small subunit family. Adaptor protein complex 3 (AP-3) is a heterotetramer composed of two large adaptins (delta-type subunit AP3D1 and beta-type subunit AP3B1 or AP3B2), a medium adaptin (mu-type subunit AP3M1 or AP3M2) and a small adaptin (sigma-type subunit APS1 or AP3S2). Interacts with AGAP1. AP-3 associates with the BLOC-1 complex.

It is found in the golgi apparatus. The protein resides in the cytoplasmic vesicle membrane. In terms of biological role, part of the AP-3 complex, an adaptor-related complex which is not clathrin-associated. The complex is associated with the Golgi region as well as more peripheral structures. It facilitates the budding of vesicles from the Golgi membrane and may be directly involved in trafficking to lysosomes. In concert with the BLOC-1 complex, AP-3 is required to target cargos into vesicles assembled at cell bodies for delivery into neurites and nerve terminals. The polypeptide is AP-3 complex subunit sigma-1 (AP3S1) (Bos taurus (Bovine)).